The sequence spans 357 residues: Fructose-bisphosphate aldolase (357 aa).

Substrate is bound by residues Arg-49 and Lys-140. Glu-183 (proton acceptor) is an active-site residue. Lys-225 serves as the catalytic Schiff-base intermediate with dihydroxyacetone-P.

The protein belongs to the class I fructose-bisphosphate aldolase family.

The catalysed reaction is beta-D-fructose 1,6-bisphosphate = D-glyceraldehyde 3-phosphate + dihydroxyacetone phosphate. It participates in carbohydrate degradation; glycolysis; D-glyceraldehyde 3-phosphate and glycerone phosphate from D-glucose: step 4/4. The chain is Fructose-bisphosphate aldolase (fba) from Dictyostelium discoideum (Social amoeba).